A 181-amino-acid polypeptide reads, in one-letter code: uncharacterized protein (181 aa).

2 helical membrane passes run 24 to 46 (IAAVLISTSFVLFGFLALVLLNV) and 55 to 77 (GIVAIVSLIAIWVLMTAGVYILL).

The protein localises to the cell membrane. This is an uncharacterized protein from Archaeoglobus fulgidus (strain ATCC 49558 / DSM 4304 / JCM 9628 / NBRC 100126 / VC-16).